The sequence spans 341 residues: NADH-quinone oxidoreductase subunit H (341 aa).

Transmembrane regions (helical) follow at residues 38–58 (PSVVGPFGLLQPFADAIKLLV), 70–90 (ILFIMAPMLTFILALIVWAVI), 115–135 (IGVLYVLAISSLGIYGIIVAG), 161–181 (MGLIVATVVITTGTLNLGEMV), 187–207 (MPFWIDLLMMPIGVVFFISLL), 239–259 (LFFLGEYANMILGSAMMTIFF), 275–295 (IPGLIWFVLKIVLLLFIFVWT), and 314–334 (VFLPISVLWVILISGVLLFTG).

Belongs to the complex I subunit 1 family. NDH-1 is composed of 14 different subunits. Subunits NuoA, H, J, K, L, M, N constitute the membrane sector of the complex.

Its subcellular location is the cell membrane. The enzyme catalyses a quinone + NADH + 5 H(+)(in) = a quinol + NAD(+) + 4 H(+)(out). In terms of biological role, NDH-1 shuttles electrons from NADH, via FMN and iron-sulfur (Fe-S) centers, to quinones in the respiratory chain. The immediate electron acceptor for the enzyme in this species is believed to be ubiquinone. Couples the redox reaction to proton translocation (for every two electrons transferred, four hydrogen ions are translocated across the cytoplasmic membrane), and thus conserves the redox energy in a proton gradient. This subunit may bind ubiquinone. In Wolbachia sp. subsp. Brugia malayi (strain TRS), this protein is NADH-quinone oxidoreductase subunit H.